A 174-amino-acid chain; its full sequence is Peptide methionine sulfoxide reductase MsrA (174 aa).

Cys-10 is a catalytic residue.

It belongs to the MsrA Met sulfoxide reductase family.

It catalyses the reaction L-methionyl-[protein] + [thioredoxin]-disulfide + H2O = L-methionyl-(S)-S-oxide-[protein] + [thioredoxin]-dithiol. The catalysed reaction is [thioredoxin]-disulfide + L-methionine + H2O = L-methionine (S)-S-oxide + [thioredoxin]-dithiol. Its function is as follows. Has an important function as a repair enzyme for proteins that have been inactivated by oxidation. Catalyzes the reversible oxidation-reduction of methionine sulfoxide in proteins to methionine. This chain is Peptide methionine sulfoxide reductase MsrA, found in Arthrobacter sp. (strain FB24).